The sequence spans 348 residues: tRNA N6-adenosine threonylcarbamoyltransferase (348 aa).

2 residues coordinate Fe cation: His111 and His115. Residues 134 to 138, Asp167, Gly180, and Asn276 contribute to the substrate site; that span reads LVSGG. Fe cation is bound at residue Asp304.

It belongs to the KAE1 / TsaD family. The cofactor is Fe(2+).

The protein resides in the cytoplasm. It carries out the reaction L-threonylcarbamoyladenylate + adenosine(37) in tRNA = N(6)-L-threonylcarbamoyladenosine(37) in tRNA + AMP + H(+). Its function is as follows. Required for the formation of a threonylcarbamoyl group on adenosine at position 37 (t(6)A37) in tRNAs that read codons beginning with adenine. Is involved in the transfer of the threonylcarbamoyl moiety of threonylcarbamoyl-AMP (TC-AMP) to the N6 group of A37, together with TsaE and TsaB. TsaD likely plays a direct catalytic role in this reaction. This chain is tRNA N6-adenosine threonylcarbamoyltransferase, found in Bordetella petrii (strain ATCC BAA-461 / DSM 12804 / CCUG 43448).